The following is a 270-amino-acid chain: ATP synthase subunit a (270 aa).

A run of 5 helical transmembrane segments spans residues 37-57, 98-118, 143-163, 217-237, and 239-259; these read NVHIDSLFFSVFTGMLFLWVF, IAPLALTIFCWVILMNLMDLV, DVNITMAMALGVFALMIYYSI, VVFILIAAMLPWYLQWVGALP, and AIFHILVILIQAFVFMMLTIV.

The protein belongs to the ATPase A chain family. In terms of assembly, F-type ATPases have 2 components, CF(1) - the catalytic core - and CF(0) - the membrane proton channel. CF(1) has five subunits: alpha(3), beta(3), gamma(1), delta(1), epsilon(1). CF(0) has three main subunits: a(1), b(2) and c(9-12). The alpha and beta chains form an alternating ring which encloses part of the gamma chain. CF(1) is attached to CF(0) by a central stalk formed by the gamma and epsilon chains, while a peripheral stalk is formed by the delta and b chains.

The protein resides in the cell inner membrane. In terms of biological role, key component of the proton channel; it plays a direct role in the translocation of protons across the membrane. This chain is ATP synthase subunit a, found in Aliivibrio fischeri (strain ATCC 700601 / ES114) (Vibrio fischeri).